The sequence spans 313 residues: Homoserine O-acetyltransferase (313 aa).

Cys144 functions as the Acyl-thioester intermediate in the catalytic mechanism. 2 residues coordinate substrate: Lys165 and Ser194. The active-site Proton acceptor is the His236. Residue Glu238 is part of the active site. Residue Arg250 participates in substrate binding.

This sequence belongs to the MetA family.

It is found in the cytoplasm. It carries out the reaction L-homoserine + acetyl-CoA = O-acetyl-L-homoserine + CoA. The protein operates within amino-acid biosynthesis; L-methionine biosynthesis via de novo pathway; O-acetyl-L-homoserine from L-homoserine: step 1/1. Functionally, transfers an acetyl group from acetyl-CoA to L-homoserine, forming acetyl-L-homoserine. The protein is Homoserine O-acetyltransferase of Jannaschia sp. (strain CCS1).